We begin with the raw amino-acid sequence, 789 residues long: E3 UFM1-protein ligase 1 (789 aa).

Residues 2–212 (AADWEEIRRL…VSNLITRYGF (211 aa)) are required for E3 UFM1-protein ligase activity. 2 disordered regions span residues 407–470 (LENS…TGRN) and 743–763 (SKKA…ADTI). Residues 444–453 (KIKKTKKKGR) are compositionally biased toward basic residues. Acidic residues predominate over residues 748 to 760 (QEDDNKTEEEEGA).

This sequence belongs to the UFL1 family. Catalytic component of the UFM1 ribosome E3 ligase (UREL) complex. Interacts with E2-like enzyme UFC1.

It is found in the endoplasmic reticulum membrane. It localises to the cytoplasm. The protein resides in the cytosol. The protein localises to the nucleus. Its subcellular location is the chromosome. In terms of biological role, E3 protein ligase that mediates ufmylation, the covalent attachment of the ubiquitin-like modifier UFM1 to lysine residues on target proteins, and which plays a key role in various processes, such as ribosome recycling, response to DNA damage, interferon response or reticulophagy (also called ER-phagy). As part of the UREL complex, plays a key role in ribosome recycling by catalyzing mono-ufmylation of RPL26/uL24 subunit of the 60S ribosome. Ufmylation of RPL26/uL24 occurs on free 60S ribosomes following ribosome dissociation: it weakens the junction between post-termination 60S subunits and SEC61 translocons, promoting release and recycling of the large ribosomal subunit from the endoplasmic reticulum membrane. Ufmylation of RPL26/uL24 and subsequent 60S ribosome recycling either take place after normal termination of translation or after ribosome stalling during cotranslational translocation at the endoplasmic reticulum. Involved in reticulophagy in response to endoplasmic reticulum stress by mediating ufmylation of proteins such as CYB5R3 and RPN1, thereby promoting lysosomal degradation of ufmylated proteins. Ufmylation in response to endoplasmic reticulum stress is essential for processes such as hematopoiesis, blood vessel morphogenesis or inflammatory response. The protein is E3 UFM1-protein ligase 1 of Gallus gallus (Chicken).